A 35-amino-acid polypeptide reads, in one-letter code: Cecropin-A (35 aa).

Leu-35 bears the Leucine amide mark.

In terms of assembly, monomer. Hemolymph.

The protein resides in the secreted. Its function is as follows. Cecropins have lytic and antibacterial activity against several Gram-positive and Gram-negative bacteria. Also has activity against fungi. This is Cecropin-A from Heliothis virescens (Tobacco budworm moth).